The sequence spans 292 residues: Homoserine kinase (292 aa).

80 to 90 (PLARGLGSSSS) contributes to the ATP binding site.

The protein belongs to the GHMP kinase family. Homoserine kinase subfamily.

Its subcellular location is the cytoplasm. The enzyme catalyses L-homoserine + ATP = O-phospho-L-homoserine + ADP + H(+). Its pathway is amino-acid biosynthesis; L-threonine biosynthesis; L-threonine from L-aspartate: step 4/5. Catalyzes the ATP-dependent phosphorylation of L-homoserine to L-homoserine phosphate. This is Homoserine kinase from Leuconostoc mesenteroides subsp. mesenteroides (strain ATCC 8293 / DSM 20343 / BCRC 11652 / CCM 1803 / JCM 6124 / NCDO 523 / NBRC 100496 / NCIMB 8023 / NCTC 12954 / NRRL B-1118 / 37Y).